The sequence spans 71 residues: Cytochrome c oxidase subunit 7, mitochondrial (71 aa).

The Mitochondrial matrix segment spans residues 1 to 35 (MPGLVNAPNHVPEKQRYYQQAFKNHTRLWKIGPRS). Residues 36–58 (GIIMTTFNIAMWGTFGASMYAMS) form a helical membrane-spanning segment. The Mitochondrial intermembrane portion of the chain corresponds to 59–71 (RKVLGYNTWFSED).

This sequence belongs to the cytochrome c oxidase VIIa family. In terms of assembly, component of the cytochrome c oxidase (complex IV, CIV), a multisubunit enzyme composed of 11 subunits. The complex is composed of a catalytic core of 3 subunits Cox1, Cox2 and Cox3, encoded in the mitochondrial DNA, and 8 supernumerary subunits Cox4, Cox5a/Cox5, Cox6, Cox7, Cox8, Cox7a/Cox9, Cox6b/Cox12 and Cox6a/Cox13, which are encoded in the nuclear genome. The complex exists as a monomer or a dimer and forms respiratory supercomplexes (SCs) in the inner mitochondrial membrane with NADH-ubiquinone oxidoreductase (complex I, CI) and ubiquinol-cytochrome c oxidoreductase (cytochrome b-c1 complex, complex III, CIII), resulting in various different assemblies (supercomplexes I(1)IV(1), I(1)III(3)IV(2), III(2)IV(1) and III(2)IV(2) as well as larger supercomplexes of compositions like I(1)III(2)IV(5-6)).

It localises to the mitochondrion inner membrane. It functions in the pathway energy metabolism; oxidative phosphorylation. Functionally, component of the cytochrome c oxidase, the last enzyme in the mitochondrial electron transport chain which drives oxidative phosphorylation. The respiratory chain contains 3 multisubunit complexes succinate dehydrogenase (complex II, CII), ubiquinol-cytochrome c oxidoreductase (cytochrome b-c1 complex, complex III, CIII) and cytochrome c oxidase (complex IV, CIV), that cooperate to transfer electrons derived from NADH and succinate to molecular oxygen, creating an electrochemical gradient over the inner membrane that drives transmembrane transport and the ATP synthase. Cytochrome c oxidase is the component of the respiratory chain that catalyzes the reduction of oxygen to water. Electrons originating from reduced cytochrome c in the intermembrane space (IMS) are transferred via the dinuclear copper A center (CU(A)) of Cox2 and heme A of Cox1 to the active site in Cox1, a binuclear center (BNC) formed by heme A3 and copper B (CU(B)). The BNC reduces molecular oxygen to 2 water molecules using 4 electrons from cytochrome c in the IMS and 4 protons from the mitochondrial matrix. The polypeptide is Cytochrome c oxidase subunit 7, mitochondrial (Neurospora crassa (strain ATCC 24698 / 74-OR23-1A / CBS 708.71 / DSM 1257 / FGSC 987)).